The sequence spans 77 residues: MANIKSAIKRAELNKIANERNAQQKSAMRTLIKKFEAAPSEELYRAASSTIDKAASKGLIHANKASRDKARLAAKLG.

This sequence belongs to the bacterial ribosomal protein bS20 family.

In terms of biological role, binds directly to 16S ribosomal RNA. This is Small ribosomal subunit protein bS20 from Lactococcus lactis subsp. cremoris (strain MG1363).